A 122-amino-acid polypeptide reads, in one-letter code: Histone H2B, gonadal (122 aa).

The tract at residues 1 to 31 (MPPKPSGKGQKKAGKAKGAPRTDKKRRRKRK) is disordered. N,N-dimethylproline is present on P2. S109 is a glycosylation site (O-linked (GlcNAc) serine). K117 is covalently cross-linked (Glycyl lysine isopeptide (Lys-Gly) (interchain with G-Cter in ubiquitin)).

The protein belongs to the histone H2B family. In terms of assembly, the nucleosome is a histone octamer containing two molecules each of H2A, H2B, H3 and H4 assembled in one H3-H4 heterotetramer and two H2A-H2B heterodimers. The octamer wraps approximately 147 bp of DNA. Monoubiquitination of Lys-117 gives a specific tag for epigenetic transcriptional activation and is also prerequisite for histone H3 'Lys-4' and 'Lys-79' methylation. Post-translationally, glcNAcylation at Ser-109 promotes monoubiquitination of Lys-117. It fluctuates in response to extracellular glucose, and associates with transcribed genes.

The protein localises to the nucleus. It is found in the chromosome. In terms of biological role, core component of nucleosome. Nucleosomes wrap and compact DNA into chromatin, limiting DNA accessibility to the cellular machineries which require DNA as a template. Histones thereby play a central role in transcription regulation, DNA repair, DNA replication and chromosomal stability. DNA accessibility is regulated via a complex set of post-translational modifications of histones, also called histone code, and nucleosome remodeling. The protein is Histone H2B, gonadal of Asterias rubens (Common European starfish).